The sequence spans 356 residues: Sterol-4-alpha-carboxylate 3-dehydrogenase, decarboxylating (356 aa).

N-acetylmethionine is present on Met1. The active-site Proton acceptor is Tyr155. NAD(+) is bound at residue Lys159. Residues 281–301 (WLAYYLALLVSLLVMVISPVI) traverse the membrane as a helical segment. Positions 353-356 (RKVM) match the Prevents secretion from ER motif.

Belongs to the 3-beta-HSD family. In terms of assembly, homodimer.

The protein resides in the endoplasmic reticulum membrane. It localises to the lipid droplet. The enzyme catalyses a 3beta-hydroxysteroid-4alpha-carboxylate + NADP(+) = a 3-oxosteroid + CO2 + NADPH. The catalysed reaction is a 3beta-hydroxysteroid-4alpha-carboxylate + NAD(+) = a 3-oxosteroid + CO2 + NADH. It catalyses the reaction 4alpha-carboxyzymosterol + NADP(+) = zymosterone + CO2 + NADPH. It carries out the reaction 4alpha-carboxy-4beta-methyl-5alpha-cholest-8-en-3beta-ol + NADP(+) = 4alpha-methyl-5alpha-cholest-8-en-3-one + CO2 + NADPH. The enzyme catalyses 4alpha-carboxy-5alpha-cholest-8-ene-3beta-ol + NADP(+) = 5alpha-cholest-8-en-3-one + CO2 + NADPH. The catalysed reaction is 4beta-methylzymosterol-4alpha-carboxylate + NADP(+) = 3-dehydro-4-methylzymosterol + CO2 + NADPH. It catalyses the reaction 4beta-methylzymosterol-4alpha-carboxylate + NAD(+) = 3-dehydro-4-methylzymosterol + CO2 + NADH. It carries out the reaction 4alpha-carboxy-5alpha-cholest-8-ene-3beta-ol + NAD(+) = 5alpha-cholest-8-en-3-one + CO2 + NADH. The enzyme catalyses 4alpha-carboxy-4beta-methyl-5alpha-cholest-8-en-3beta-ol + NAD(+) = 4alpha-methyl-5alpha-cholest-8-en-3-one + CO2 + NADH. The catalysed reaction is 4alpha-carboxyzymosterol + NAD(+) = zymosterone + CO2 + NADH. It participates in steroid biosynthesis; zymosterol biosynthesis; zymosterol from lanosterol: step 4/6. Catalyzes the NAD(P)(+)-dependent oxidative decarboxylation of the C4 methyl groups of 4-alpha-carboxysterols in post-squalene cholesterol biosynthesis. Also plays a role in the regulation of the endocytic trafficking of EGFR. The polypeptide is Sterol-4-alpha-carboxylate 3-dehydrogenase, decarboxylating (NSDHL) (Bos taurus (Bovine)).